We begin with the raw amino-acid sequence, 478 residues long: Cobyric acid synthase (478 aa).

Residues 250–437 (QLRVVVPVLP…VHGVFDHPMH (188 aa)) enclose the GATase cobBQ-type domain. Cys331 functions as the Nucleophile in the catalytic mechanism. The active site involves His429.

The protein belongs to the CobB/CobQ family. CobQ subfamily.

Its pathway is cofactor biosynthesis; adenosylcobalamin biosynthesis. Functionally, catalyzes amidations at positions B, D, E, and G on adenosylcobyrinic A,C-diamide. NH(2) groups are provided by glutamine, and one molecule of ATP is hydrogenolyzed for each amidation. The protein is Cobyric acid synthase of Xanthomonas euvesicatoria pv. vesicatoria (strain 85-10) (Xanthomonas campestris pv. vesicatoria).